The sequence spans 96 residues: MTLRPLHDKVILKREEVETRSAGGIVLTGSAATKSTRGKVIAVGTGRLLENGSVQALAVKVGDVVIFNEGYGVKSEKIDGEEVLILSENDILAIVE.

It belongs to the GroES chaperonin family. Heptamer of 7 subunits arranged in a ring. Interacts with the chaperonin GroEL.

Its subcellular location is the cytoplasm. Functionally, together with the chaperonin GroEL, plays an essential role in assisting protein folding. The GroEL-GroES system forms a nano-cage that allows encapsulation of the non-native substrate proteins and provides a physical environment optimized to promote and accelerate protein folding. GroES binds to the apical surface of the GroEL ring, thereby capping the opening of the GroEL channel. The chain is Co-chaperonin GroES from Actinobacillus pleuropneumoniae serotype 7 (strain AP76).